The sequence spans 124 residues: UPF0231 protein Sputcn32_0682 (124 aa).

The protein belongs to the UPF0231 family.

This Shewanella putrefaciens (strain CN-32 / ATCC BAA-453) protein is UPF0231 protein Sputcn32_0682.